The primary structure comprises 281 residues: UPF0294 protein VC_2238 (281 aa).

It belongs to the UPF0294 family.

It is found in the cytoplasm. This chain is UPF0294 protein VC_2238, found in Vibrio cholerae serotype O1 (strain ATCC 39315 / El Tor Inaba N16961).